We begin with the raw amino-acid sequence, 175 residues long: Transcription factor E (175 aa).

An HTH TFE/IIEalpha-type domain is found at 3–88 (DNPLIQQVLF…TWKPSLEKLP (86 aa)).

It belongs to the TFE family. Monomer. Interaction with RNA polymerase subunits RpoF and RpoE is necessary for Tfe stimulatory transcription activity. Able to interact with Tbp and RNA polymerase in the absence of DNA promoter. Interacts both with the preinitiation and elongation complexes.

Transcription factor that plays a role in the activation of archaeal genes transcribed by RNA polymerase. Facilitates transcription initiation by enhancing TATA-box recognition by TATA-box-binding protein (Tbp), and transcription factor B (Tfb) and RNA polymerase recruitment. Not absolutely required for transcription in vitro, but particularly important in cases where Tbp or Tfb function is not optimal. It dynamically alters the nucleic acid-binding properties of RNA polymerases by stabilizing the initiation complex and destabilizing elongation complexes. Seems to translocate with the RNA polymerase following initiation and acts by binding to the non template strand of the transcription bubble in elongation complexes. In Methanococcus vannielii (strain ATCC 35089 / DSM 1224 / JCM 13029 / OCM 148 / SB), this protein is Transcription factor E.